An 850-amino-acid chain; its full sequence is Protein translocase subunit SecA (850 aa).

ATP-binding positions include Gln-87, Gly-105–Thr-109, and Asp-494. The Zn(2+) site is built by Cys-834, Cys-836, Cys-845, and Cys-846.

The protein belongs to the SecA family. In terms of assembly, monomer and homodimer. Part of the essential Sec protein translocation apparatus which comprises SecA, SecYEG and auxiliary proteins SecDF-YajC and YidC. It depends on Zn(2+) as a cofactor.

Its subcellular location is the cell inner membrane. It is found in the cytoplasm. The enzyme catalyses ATP + H2O + cellular proteinSide 1 = ADP + phosphate + cellular proteinSide 2.. Functionally, part of the Sec protein translocase complex. Interacts with the SecYEG preprotein conducting channel. Has a central role in coupling the hydrolysis of ATP to the transfer of proteins into and across the cell membrane, serving as an ATP-driven molecular motor driving the stepwise translocation of polypeptide chains across the membrane. This is Protein translocase subunit SecA from Desulfotalea psychrophila (strain LSv54 / DSM 12343).